A 353-amino-acid polypeptide reads, in one-letter code: Holliday junction branch migration complex subunit RuvB (353 aa).

The tract at residues 1 to 183 (MSGEGLVSAA…FGFTAHMDFY (183 aa)) is large ATPase domain (RuvB-L). ATP-binding positions include L22, R23, G64, K67, T68, S69, 130–132 (EDF), R173, Y183, and R220. Position 68 (T68) interacts with Mg(2+). The interval 184 to 254 (DAAELALVLT…VARAALRIYD (71 aa)) is small ATPAse domain (RuvB-S). Residues 257–353 (ALGLDRLDRA…ALFGEDLPAS (97 aa)) form a head domain (RuvB-H) region. 2 residues coordinate DNA: R312 and R317.

The protein belongs to the RuvB family. In terms of assembly, homohexamer. Forms an RuvA(8)-RuvB(12)-Holliday junction (HJ) complex. HJ DNA is sandwiched between 2 RuvA tetramers; dsDNA enters through RuvA and exits via RuvB. An RuvB hexamer assembles on each DNA strand where it exits the tetramer. Each RuvB hexamer is contacted by two RuvA subunits (via domain III) on 2 adjacent RuvB subunits; this complex drives branch migration. In the full resolvosome a probable DNA-RuvA(4)-RuvB(12)-RuvC(2) complex forms which resolves the HJ.

The protein localises to the cytoplasm. The enzyme catalyses ATP + H2O = ADP + phosphate + H(+). In terms of biological role, the RuvA-RuvB-RuvC complex processes Holliday junction (HJ) DNA during genetic recombination and DNA repair, while the RuvA-RuvB complex plays an important role in the rescue of blocked DNA replication forks via replication fork reversal (RFR). RuvA specifically binds to HJ cruciform DNA, conferring on it an open structure. The RuvB hexamer acts as an ATP-dependent pump, pulling dsDNA into and through the RuvAB complex. RuvB forms 2 homohexamers on either side of HJ DNA bound by 1 or 2 RuvA tetramers; 4 subunits per hexamer contact DNA at a time. Coordinated motions by a converter formed by DNA-disengaged RuvB subunits stimulates ATP hydrolysis and nucleotide exchange. Immobilization of the converter enables RuvB to convert the ATP-contained energy into a lever motion, pulling 2 nucleotides of DNA out of the RuvA tetramer per ATP hydrolyzed, thus driving DNA branch migration. The RuvB motors rotate together with the DNA substrate, which together with the progressing nucleotide cycle form the mechanistic basis for DNA recombination by continuous HJ branch migration. Branch migration allows RuvC to scan DNA until it finds its consensus sequence, where it cleaves and resolves cruciform DNA. This chain is Holliday junction branch migration complex subunit RuvB, found in Parafrankia sp. (strain EAN1pec).